Consider the following 728-residue polypeptide: 1,4-alpha-glucan branching enzyme GlgB (728 aa).

The Nucleophile role is filled by D405. Residue E458 is the Proton donor of the active site.

This sequence belongs to the glycosyl hydrolase 13 family. GlgB subfamily. Monomer.

It catalyses the reaction Transfers a segment of a (1-&gt;4)-alpha-D-glucan chain to a primary hydroxy group in a similar glucan chain.. It participates in glycan biosynthesis; glycogen biosynthesis. Catalyzes the formation of the alpha-1,6-glucosidic linkages in glycogen by scission of a 1,4-alpha-linked oligosaccharide from growing alpha-1,4-glucan chains and the subsequent attachment of the oligosaccharide to the alpha-1,6 position. The polypeptide is 1,4-alpha-glucan branching enzyme GlgB (Salmonella paratyphi A (strain ATCC 9150 / SARB42)).